Consider the following 926-residue polypeptide: Storkhead-box protein 2 (926 aa).

Disordered regions lie at residues 1-32 (MKKTRSTTLRRAWPSSDFSDRASDRMRSRSEK), 338-391 (EEEK…HLDI), 452-529 (EMPF…SYID), 564-588 (KEPSSACSLLEPGKPPESLPSYGEL), 632-672 (GVKK…GGVA), 724-803 (LKSH…GTMQ), and 825-926 (LAPK…VTSV). Positions 18–32 (FSDRASDRMRSRSEK) are enriched in basic and acidic residues. The segment covering 353 to 378 (HSGRSKKSRTHRKSHGKSRSHSKTRV) has biased composition (basic residues). Residues 379–391 (SKGDPSDGSHLDI) are compositionally biased toward basic and acidic residues. The segment covering 463–472 (SHSKVHRSHS) has biased composition (basic residues). The segment covering 473–495 (HTQDRRSRNERSNKAKERSRSMD) has biased composition (basic and acidic residues). The span at 518 to 529 (QDDQTPSQSYID) shows a compositional bias: polar residues. The segment covering 632–658 (GVKKLSPSDRQVPHSSREPVGHKEESP) has biased composition (basic and acidic residues). Positions 746-769 (LGTSAAQAMPASQRQQESGGNQEA) are enriched in polar residues. A compositionally biased stretch (basic and acidic residues) spans 785–799 (GANKNTEEEKNREDV). Composition is skewed to polar residues over residues 847–884 (MDSSSITVDSGFNSPRTRESLASNTSSIVESNRRQNPA) and 914–926 (KPSNCLQASVTSV).

The chain is Storkhead-box protein 2 (STOX2) from Homo sapiens (Human).